The primary structure comprises 551 residues: Adenylosuccinate synthetase (551 aa).

GTP-binding positions include 131–137 (GDEGKGK) and 159–161 (GHT). The active-site Proton acceptor is D132. Mg(2+) contacts are provided by D132 and G159. IMP contacts are provided by residues 132–135 (DEGK), 157–160 (NAGH), T248, R262, N339, T354, and R418. Residue H160 is the Proton donor of the active site. A substrate-binding site is contributed by 414–420 (TTTGRAR). GTP-binding positions include R420, 446–448 (KLD), and 528–530 (GVG).

The protein belongs to the adenylosuccinate synthetase family. As to quaternary structure, homodimer. Mg(2+) serves as cofactor.

It is found in the cytoplasm. It catalyses the reaction IMP + L-aspartate + GTP = N(6)-(1,2-dicarboxyethyl)-AMP + GDP + phosphate + 2 H(+). It participates in purine metabolism; AMP biosynthesis via de novo pathway; AMP from IMP: step 1/2. Plays an important role in the de novo pathway and in the salvage pathway of purine nucleotide biosynthesis. Catalyzes the first committed step in the biosynthesis of AMP from IMP. The protein is Adenylosuccinate synthetase of Phytophthora infestans (strain T30-4) (Potato late blight agent).